We begin with the raw amino-acid sequence, 1353 residues long: Xanthine dehydrogenase (1353 aa).

The 88-residue stretch at S17–I104 folds into the 2Fe-2S ferredoxin-type domain. Residues C56, C61, C64, C86, C126, C129, C161, and C163 each contribute to the [2Fe-2S] cluster site. In terms of domain architecture, FAD-binding PCMH-type spans Y245 to E434. FAD contacts are provided by residues L273 to I280, F353, S363 to N367, D376, L424, and K442. Positions 790 and 821 each coordinate Mo-molybdopterin. Residues E825 and R903 each contribute to the substrate site. Position 935 (R935) interacts with Mo-molybdopterin. Residue F937 participates in substrate binding. A1102 is a binding site for Mo-molybdopterin. The active-site Proton acceptor is E1285.

Belongs to the xanthine dehydrogenase family. In terms of assembly, homodimer. FAD is required as a cofactor. The cofactor is Mo-molybdopterin. [2Fe-2S] cluster serves as cofactor.

It localises to the peroxisome. The enzyme catalyses xanthine + NAD(+) + H2O = urate + NADH + H(+). It catalyses the reaction hypoxanthine + NAD(+) + H2O = xanthine + NADH + H(+). Functionally, key enzyme in purine degradation. Catalyzes the oxidation of hypoxanthine to xanthine. Catalyzes the oxidation of xanthine to uric acid. This chain is Xanthine dehydrogenase (XDH), found in Calliphora vicina (Blue blowfly).